A 191-amino-acid chain; its full sequence is Iron-sulfur flavoprotein (191 aa).

Cys-47, Cys-50, Cys-53, and Cys-59 together coordinate [4Fe-4S] cluster.

This sequence belongs to the SsuE family. Isf subfamily. In terms of assembly, homodimer. The cofactor is FMN. [4Fe-4S] cluster serves as cofactor.

Functionally, redox-active protein probably involved in electron transport during fermentation of acetate to methane. The protein is Iron-sulfur flavoprotein (isf) of Methanosarcina thermophila.